Consider the following 141-residue polypeptide: MPGLFAAKKLKSKRQKFKWKDTHYKRRSLRLDVKADPLEGAPQARGIVIEKVGIEAKQPNSAIRKCVRVQLIKNGKQITAFAPGDGAIGFIDEHDEVVVEGIGGPSGRSMGDIPGVRWKVTKVNNVSLQEMVKGKIEKPVR.

It belongs to the universal ribosomal protein uS12 family. Part of the 30S ribosomal subunit.

With S4 and S5 plays an important role in translational accuracy. Located at the interface of the 30S and 50S subunits. This Methanothermobacter thermautotrophicus (strain ATCC 29096 / DSM 1053 / JCM 10044 / NBRC 100330 / Delta H) (Methanobacterium thermoautotrophicum) protein is Small ribosomal subunit protein uS12.